Here is a 235-residue protein sequence, read N- to C-terminus: Aspartate/glutamate leucyltransferase (235 aa).

This sequence belongs to the R-transferase family. Bpt subfamily.

It is found in the cytoplasm. It carries out the reaction N-terminal L-glutamyl-[protein] + L-leucyl-tRNA(Leu) = N-terminal L-leucyl-L-glutamyl-[protein] + tRNA(Leu) + H(+). The catalysed reaction is N-terminal L-aspartyl-[protein] + L-leucyl-tRNA(Leu) = N-terminal L-leucyl-L-aspartyl-[protein] + tRNA(Leu) + H(+). Functions in the N-end rule pathway of protein degradation where it conjugates Leu from its aminoacyl-tRNA to the N-termini of proteins containing an N-terminal aspartate or glutamate. This is Aspartate/glutamate leucyltransferase from Pseudomonas aeruginosa (strain LESB58).